The chain runs to 249 residues: Uridylate kinase (249 aa).

15–18 (KLSG) lines the ATP pocket. An involved in allosteric activation by GTP region spans residues 23–28 (GDEGFG). Gly-57 is a UMP binding site. Positions 58 and 62 each coordinate ATP. Residues Asp-77 and 138–145 (TGNPFFTT) each bind UMP. ATP-binding residues include Thr-165, Tyr-171, and Asp-174.

The protein belongs to the UMP kinase family. As to quaternary structure, homohexamer.

It is found in the cytoplasm. The catalysed reaction is UMP + ATP = UDP + ADP. It participates in pyrimidine metabolism; CTP biosynthesis via de novo pathway; UDP from UMP (UMPK route): step 1/1. Allosterically activated by GTP. Inhibited by UTP. Catalyzes the reversible phosphorylation of UMP to UDP. This chain is Uridylate kinase, found in Pseudoalteromonas translucida (strain TAC 125).